Here is a 353-residue protein sequence, read N- to C-terminus: Lipase-specific foldase (353 aa).

Residues 1 to 19 (MAQADRPARGGLAARPMRG) are Cytoplasmic-facing. A helical membrane pass occupies residues 20–40 (ASFALAGLVACAACAAVVLWL). Over 41–353 (RPAAPSPAPA…AASLDRGAGG (313 aa)) the chain is Periplasmic.

This sequence belongs to the lipase chaperone family. As to quaternary structure, monomer. Interacts with lipase (lip).

It is found in the cell inner membrane. Functionally, involved in the folding of the extracellular lipase (lip) during its passage through the periplasm. The chain is Lipase-specific foldase from Burkholderia plantarii.